The chain runs to 939 residues: UvrABC system protein A (939 aa).

32–39 (GLSGSGKS) contributes to the ATP binding site. The C4-type zinc-finger motif lies at 252 to 279 (CPDCGISIGEISPSMFSFNAPFGKCDVC). 2 ABC transporter domains span residues 309 to 588 (WGEG…KESI) and 608 to 936 (AGKN…QYLK). 640 to 647 (GVSGSGKS) contacts ATP. Residues 739 to 765 (CEACKGDGIVRIEMQFLSDVYVPCDVC) form a C4-type zinc finger.

It belongs to the ABC transporter superfamily. UvrA family. As to quaternary structure, forms a heterotetramer with UvrB during the search for lesions.

Its subcellular location is the cytoplasm. Its function is as follows. The UvrABC repair system catalyzes the recognition and processing of DNA lesions. UvrA is an ATPase and a DNA-binding protein. A damage recognition complex composed of 2 UvrA and 2 UvrB subunits scans DNA for abnormalities. When the presence of a lesion has been verified by UvrB, the UvrA molecules dissociate. This chain is UvrABC system protein A, found in Clostridium acetobutylicum (strain ATCC 824 / DSM 792 / JCM 1419 / IAM 19013 / LMG 5710 / NBRC 13948 / NRRL B-527 / VKM B-1787 / 2291 / W).